The primary structure comprises 649 residues: Vitamin K-dependent protein S (649 aa).

Residues 1-14 (SKQQASQVLVRKRR) constitute a propeptide that is removed on maturation. A Gla domain is found at 15–60 (ANSMLEETKQGNLERECIEELCNKEEAREVFENDPETDYFYPKYLV). 11 positions are modified to 4-carboxyglutamate: Glu20, Glu21, Glu28, Glu30, Glu33, Glu34, Glu39, Glu40, Glu43, Glu46, and Glu50. Cys31 and Cys36 form a disulfide bridge. The thrombin-sensitive stretch occupies residues 61–89 (CLRSFQSGLFTAARQSTDAYPDLRSCVNA). The EGF-like 1 domain occupies 90-128 (IPDQCSPLPCNEDGYMSCKDGKASFTCTCKPGWQGERCE). Cystine bridges form between Cys94–Cys107, Cys99–Cys116, Cys118–Cys127, Cys134–Cys148, Cys144–Cys157, Cys159–Cys172, Cys178–Cys190, Cys185–Cys199, Cys201–Cys214, Cys220–Cys229, Cys225–Cys238, Cys240–Cys255, and Cys422–Cys448. (3R)-3-hydroxyaspartate is present on Asp109. Residues 130-173 (DINECKDPSNINGGCSQICDNTPGSYHCSCKSGFVMLSNKKDCK) form the EGF-like 2; calcium-binding domain. Residues 174-215 (DVDECSLKPNMCGTAVCKNIPGDFECECPEGYRYNLKSKSCE) form the EGF-like 3; calcium-binding domain. The EGF-like 4; calcium-binding domain occupies 216–256 (DVDECSENMCAQLCVNYPGGYTCYCDGKKGFKLAQDQKSCE). 2 consecutive Laminin G-like domains span residues 272 to 448 (LLYL…NKHC) and 457 to 639 (YYPG…AHSC). N-linked (GlcNAc...) asparagine glycans are attached at residues Asn472, Asn482, and Asn503. Cys612 and Cys639 are disulfide-bonded.

Post-translationally, the iron and 2-oxoglutarate dependent 3-hydroxylation of aspartate and asparagine is (R) stereospecific within EGF domains. As to expression, plasma.

It localises to the secreted. Functionally, anticoagulant plasma protein; it is a cofactor to activated protein C in the degradation of coagulation factors Va and VIIIa. It helps to prevent coagulation and stimulating fibrinolysis. This Macaca mulatta (Rhesus macaque) protein is Vitamin K-dependent protein S (PROS1).